Reading from the N-terminus, the 283-residue chain is Polyamine aminopropyltransferase (283 aa).

In terms of domain architecture, PABS spans 5 to 238 (PTWIDEYHKG…GIWSWTFASD (234 aa)). Residue Gln-32 participates in S-methyl-5'-thioadenosine binding. Spermidine is bound by residues His-63 and Asp-87. S-methyl-5'-thioadenosine contacts are provided by residues Glu-107 and 139–140 (DG). The active-site Proton acceptor is the Asp-158. 158-161 (DCSD) lines the spermidine pocket.

This sequence belongs to the spermidine/spermine synthase family. In terms of assembly, homodimer or homotetramer.

Its subcellular location is the cytoplasm. It catalyses the reaction S-adenosyl 3-(methylsulfanyl)propylamine + putrescine = S-methyl-5'-thioadenosine + spermidine + H(+). The protein operates within amine and polyamine biosynthesis; spermidine biosynthesis; spermidine from putrescine: step 1/1. Its function is as follows. Catalyzes the irreversible transfer of a propylamine group from the amino donor S-adenosylmethioninamine (decarboxy-AdoMet) to putrescine (1,4-diaminobutane) to yield spermidine. This is Polyamine aminopropyltransferase from Prochlorococcus marinus subsp. pastoris (strain CCMP1986 / NIES-2087 / MED4).